The primary structure comprises 348 residues: Selenide, water dikinase (348 aa).

C17 is a catalytic residue. ATP contacts are provided by residues K20 and 48-50 (TSD). D51 provides a ligand contact to Mg(2+). ATP contacts are provided by residues D68, D91, and 139 to 141 (GHT). A Mg(2+)-binding site is contributed by D91. D227 is a binding site for Mg(2+).

Belongs to the selenophosphate synthase 1 family. Class I subfamily. As to quaternary structure, homodimer. Requires Mg(2+) as cofactor.

The catalysed reaction is hydrogenselenide + ATP + H2O = selenophosphate + AMP + phosphate + 2 H(+). Its function is as follows. Synthesizes selenophosphate from selenide and ATP. In Dechloromonas aromatica (strain RCB), this protein is Selenide, water dikinase.